The following is a 726-amino-acid chain: F-box protein COS111 (726 aa).

The region spanning 143 to 194 (FADINCLPEEIICRIIANLNDADSQRNCLLVSQEWSECAKRIIYKDVKFTST) is the F-box domain. A disordered region spans residues 276–295 (RSRTRRSSDASSMNSSVFSH). Positions 284 to 295 (DASSMNSSVFSH) are enriched in low complexity.

Its function is as follows. F-box protein probably involved in ubiquitin conjugation pathway. This Kluyveromyces lactis (strain ATCC 8585 / CBS 2359 / DSM 70799 / NBRC 1267 / NRRL Y-1140 / WM37) (Yeast) protein is F-box protein COS111 (COS111).